The following is an 845-amino-acid chain: AdoMet-dependent rRNA methyltransferase SPB1 (845 aa).

S-adenosyl-L-methionine-binding residues include Gly-58, Trp-60, Asp-78, Asp-94, and Asp-119. The Proton acceptor role is filled by Lys-159. Disordered regions lie at residues 223 to 247 and 279 to 298; these read GGGN…SQRQ and SLNK…DDDH. 2 coiled-coil regions span residues 366 to 402 and 464 to 502; these read TEEQ…KEII and DEEE…ERDA. Over residues 496–512 the composition is skewed to basic and acidic residues; sequence RKAERDANYRAKQARGD. Disordered regions lie at residues 496–546, 587–660, and 788–821; these read RKAE…DDDE, ENKT…HQQK, and KLNK…VKGK. Composition is skewed to acidic residues over residues 513 to 528, 536 to 545, 610 to 624, and 633 to 648; these read ADDE…NDDV, MESESDDDDD, NEND…ESDF, and DDDD…DDEV. The stretch at 739-796 forms a coiled coil; sequence IKKVLEAQSRKKLRALKRLEKIKKKSDLINEDSGKSERDKADEISKLMKKLNKKQKQK. Over residues 788–797 the composition is skewed to basic residues; sequence KLNKKQKQKP.

The protein belongs to the class I-like SAM-binding methyltransferase superfamily. RNA methyltransferase RlmE family. SPB1 subfamily. As to quaternary structure, component of the nucleolar and nucleoplasmic pre-60S ribosomal particle.

Its subcellular location is the nucleus. It is found in the nucleolus. The catalysed reaction is a ribonucleotide in rRNA + S-adenosyl-L-methionine = a 2'-O-methylribonucleotide in rRNA + S-adenosyl-L-homocysteine + H(+). Its function is as follows. Required for proper assembly of pre-ribosomal particles during the biogenesis of the 60S ribosomal subunit. The sequence is that of AdoMet-dependent rRNA methyltransferase SPB1 from Candida albicans (strain SC5314 / ATCC MYA-2876) (Yeast).